We begin with the raw amino-acid sequence, 451 residues long: UDP-N-acetylmuramate--L-alanine ligase (451 aa).

110-116 (GTHGKTT) lines the ATP pocket.

This sequence belongs to the MurCDEF family.

It localises to the cytoplasm. The enzyme catalyses UDP-N-acetyl-alpha-D-muramate + L-alanine + ATP = UDP-N-acetyl-alpha-D-muramoyl-L-alanine + ADP + phosphate + H(+). Its pathway is cell wall biogenesis; peptidoglycan biosynthesis. Its function is as follows. Cell wall formation. The polypeptide is UDP-N-acetylmuramate--L-alanine ligase (Francisella tularensis subsp. holarctica (strain FTNF002-00 / FTA)).